A 347-amino-acid polypeptide reads, in one-letter code: Selenide, water dikinase (347 aa).

The active site involves Cys-17. Residues Lys-20 and Thr-48–Asp-50 each bind ATP. Residue Asp-51 participates in Mg(2+) binding. Residues Asp-68, Asp-91, and Gly-139–Ser-141 each bind ATP. Asp-91 contacts Mg(2+). Asp-227 contributes to the Mg(2+) binding site.

Belongs to the selenophosphate synthase 1 family. Class I subfamily. Homodimer. It depends on Mg(2+) as a cofactor.

The enzyme catalyses hydrogenselenide + ATP + H2O = selenophosphate + AMP + phosphate + 2 H(+). Functionally, synthesizes selenophosphate from selenide and ATP. The chain is Selenide, water dikinase from Escherichia coli O9:H4 (strain HS).